A 505-amino-acid chain; its full sequence is Putative thymidine phosphorylase (505 aa).

The protein belongs to the thymidine/pyrimidine-nucleoside phosphorylase family. Type 2 subfamily.

The catalysed reaction is thymidine + phosphate = 2-deoxy-alpha-D-ribose 1-phosphate + thymine. This chain is Putative thymidine phosphorylase, found in Tolumonas auensis (strain DSM 9187 / NBRC 110442 / TA 4).